The chain runs to 156 residues: Crossover junction endodeoxyribonuclease RuvC (156 aa).

Active-site residues include Asp-7, Glu-67, and Asp-139. Residues Asp-7, Glu-67, and Asp-139 each coordinate Mg(2+).

The protein belongs to the RuvC family. In terms of assembly, homodimer which binds Holliday junction (HJ) DNA. The HJ becomes 2-fold symmetrical on binding to RuvC with unstacked arms; it has a different conformation from HJ DNA in complex with RuvA. In the full resolvosome a probable DNA-RuvA(4)-RuvB(12)-RuvC(2) complex forms which resolves the HJ. The cofactor is Mg(2+).

Its subcellular location is the cytoplasm. It catalyses the reaction Endonucleolytic cleavage at a junction such as a reciprocal single-stranded crossover between two homologous DNA duplexes (Holliday junction).. The RuvA-RuvB-RuvC complex processes Holliday junction (HJ) DNA during genetic recombination and DNA repair. Endonuclease that resolves HJ intermediates. Cleaves cruciform DNA by making single-stranded nicks across the HJ at symmetrical positions within the homologous arms, yielding a 5'-phosphate and a 3'-hydroxyl group; requires a central core of homology in the junction. The consensus cleavage sequence is 5'-(A/T)TT(C/G)-3'. Cleavage occurs on the 3'-side of the TT dinucleotide at the point of strand exchange. HJ branch migration catalyzed by RuvA-RuvB allows RuvC to scan DNA until it finds its consensus sequence, where it cleaves and resolves the cruciform DNA. The protein is Crossover junction endodeoxyribonuclease RuvC of Sphingopyxis alaskensis (strain DSM 13593 / LMG 18877 / RB2256) (Sphingomonas alaskensis).